Here is a 219-residue protein sequence, read N- to C-terminus: uncharacterized protein (219 aa).

Helical transmembrane passes span valine 81–isoleucine 101 and proline 168–valine 188.

The protein localises to the membrane. This is an uncharacterized protein from Saccharomyces cerevisiae (strain ATCC 204508 / S288c) (Baker's yeast).